The sequence spans 859 residues: Active breakpoint cluster region-related protein (859 aa).

The interval A31–E84 is disordered. Residues P54–S64 show a composition bias toward polar residues. S57 bears the Phosphoserine mark. Residues M91–D284 form the DH domain. A PH domain is found at Q301 to K459. In terms of domain architecture, C2 spans T484–I613. The Rho-GAP domain maps to V647–F845.

In terms of assembly, interacts with DLG4. In terms of tissue distribution, expressed in brain, including the cortex, hippocampus, cerebellum, and brainstem, as well as the spinal cord (at protein level).

Its subcellular location is the cell projection. The protein localises to the dendritic spine. The protein resides in the axon. It is found in the synapse. Protein with a unique structure having two opposing regulatory activities toward small GTP-binding proteins. The C-terminus is a GTPase-activating protein domain which stimulates GTP hydrolysis by RAC1, RAC2 and CDC42. Accelerates the intrinsic rate of GTP hydrolysis of RAC1 or CDC42, leading to down-regulation of the active GTP-bound form. The central Dbl homology (DH) domain functions as guanine nucleotide exchange factor (GEF) that modulates the GTPases CDC42, RHOA and RAC1. Promotes the conversion of CDC42, RHOA and RAC1 from the GDP-bound to the GTP-bound form. Functions as an important negative regulator of neuronal RAC1 activity. Regulates macrophage functions such as CSF-1 directed motility and phagocytosis through the modulation of RAC1 activity. The protein is Active breakpoint cluster region-related protein of Rattus norvegicus (Rat).